The primary structure comprises 310 residues: Small ribosomal subunit biogenesis GTPase RsgA 2 (310 aa).

Residues 77 to 238 (LSKQSHILAA…IIDTPGIKGF (162 aa)) enclose the CP-type G domain. Residues 126 to 129 (NKVD) and 180 to 188 (GHSGVGKST) each bind GTP. Zn(2+)-binding residues include Cys262, Cys267, His269, and Cys275.

The protein belongs to the TRAFAC class YlqF/YawG GTPase family. RsgA subfamily. Monomer. Associates with 30S ribosomal subunit, binds 16S rRNA. Requires Zn(2+) as cofactor.

It is found in the cytoplasm. Its function is as follows. One of several proteins that assist in the late maturation steps of the functional core of the 30S ribosomal subunit. Helps release RbfA from mature subunits. May play a role in the assembly of ribosomal proteins into the subunit. Circularly permuted GTPase that catalyzes slow GTP hydrolysis, GTPase activity is stimulated by the 30S ribosomal subunit. This is Small ribosomal subunit biogenesis GTPase RsgA 2 from Bacteroides thetaiotaomicron (strain ATCC 29148 / DSM 2079 / JCM 5827 / CCUG 10774 / NCTC 10582 / VPI-5482 / E50).